Reading from the N-terminus, the 1201-residue chain is DNA-directed RNA polymerase subunit beta' (1201 aa).

Cys-60, Cys-62, Cys-75, and Cys-78 together coordinate Zn(2+). Residues Asp-449, Asp-451, and Asp-453 each contribute to the Mg(2+) site. Cys-818, Cys-892, Cys-899, and Cys-902 together coordinate Zn(2+).

The protein belongs to the RNA polymerase beta' chain family. In terms of assembly, the RNAP catalytic core consists of 2 alpha, 1 beta, 1 beta' and 1 omega subunit. When a sigma factor is associated with the core the holoenzyme is formed, which can initiate transcription. Mg(2+) is required as a cofactor. Requires Zn(2+) as cofactor.

It carries out the reaction RNA(n) + a ribonucleoside 5'-triphosphate = RNA(n+1) + diphosphate. DNA-dependent RNA polymerase catalyzes the transcription of DNA into RNA using the four ribonucleoside triphosphates as substrates. In Listeria innocua serovar 6a (strain ATCC BAA-680 / CLIP 11262), this protein is DNA-directed RNA polymerase subunit beta'.